Reading from the N-terminus, the 548-residue chain is tRNA (guanine(26)-N(2))-dimethyltransferase (548 aa).

Positions 30–470 (ASLTEGSAII…APWSFVWDVL (441 aa)) constitute a Trm1 methyltransferase domain. The S-adenosyl-L-methionine site is built by Arg57, Arg137, Asp155, and Ala186. Zn(2+) is bound by residues Cys317, Cys320, Cys354, and Cys357. The segment at 523 to 548 (QMNPTENWGPKSKPGKRTIAEVDSKS) is disordered.

It belongs to the class I-like SAM-binding methyltransferase superfamily. Trm1 family.

It localises to the mitochondrion. The protein localises to the nucleus. Its subcellular location is the cytoplasm. It catalyses the reaction guanosine(26) in tRNA + 2 S-adenosyl-L-methionine = N(2)-dimethylguanosine(26) in tRNA + 2 S-adenosyl-L-homocysteine + 2 H(+). Its function is as follows. Dimethylates a single guanine residue at position 26 of nuclear- and mitochondrial-encoded tRNAs using S-adenosyl-L-methionine as donor of the methyl groups. Also has tRNA strand annealing and dissociation activity independently of its tRNA guanine-dimethyltransferase activity. This is tRNA (guanine(26)-N(2))-dimethyltransferase from Schizosaccharomyces pombe (strain 972 / ATCC 24843) (Fission yeast).